The sequence spans 178 residues: Putative metal-dependent hydrolase GK0616 (178 aa).

Zn(2+) contacts are provided by H68, H161, and H165.

Belongs to the metal hydrolase YfiT family. In terms of assembly, homodimer. Zn(2+) is required as a cofactor.

Its subcellular location is the cytoplasm. In terms of biological role, possible metal-dependent hydrolase. The sequence is that of Putative metal-dependent hydrolase GK0616 from Geobacillus kaustophilus (strain HTA426).